A 24-amino-acid chain; its full sequence is Caerulein precursor fragment B4 (24 aa).

Expressed by the skin glands.

The protein resides in the secreted. Its function is as follows. Has antibacterial and antifungal activity. The polypeptide is Caerulein precursor fragment B4 (Xenopus borealis (Kenyan clawed frog)).